A 550-amino-acid polypeptide reads, in one-letter code: ATP-dependent RNA helicase MSS116, mitochondrial (550 aa).

Residues 1–11 (MPPPPKRKWPN) show a composition bias toward basic residues. The N-terminal 41 residues, 1 to 41 (MPPPPKRKWPNRPRGGGGANGSASGTPTTPRSTVAQQPKRP), are a transit peptide targeting the mitochondrion. Residues 1-51 (MPPPPKRKWPNRPRGGGGANGSASGTPTTPRSTVAQQPKRPKVEDAAPAAE) are disordered. A Q motif motif is present at residues 71 to 99 (FSELSSVLDKSLLDGLDKMGFEFMSPVQQ). One can recognise a Helicase ATP-binding domain in the interval 103-285 (TELPSLSSDC…KIVLFPGFTH (183 aa)). Position 116–123 (116–123 (AKTGTGKT)) interacts with ATP. Positions 230-233 (DEAD) match the DEAD box motif. In terms of domain architecture, Helicase C-terminal spans 316–472 (ALSALIQEEH…KVPEQEAAIT (157 aa)).

The protein belongs to the DEAD box helicase family. DDX18/HAS1 subfamily.

It is found in the mitochondrion matrix. It catalyses the reaction ATP + H2O = ADP + phosphate + H(+). ATP-dependent RNA helicase required for mitochondrial splicing of group I and II introns. Also required for efficient mitochondrial translation. This Phaeosphaeria nodorum (strain SN15 / ATCC MYA-4574 / FGSC 10173) (Glume blotch fungus) protein is ATP-dependent RNA helicase MSS116, mitochondrial (MSS116).